A 363-amino-acid polypeptide reads, in one-letter code: Chorismate synthase (363 aa).

Residues R48 and R54 each contribute to the NADP(+) site. FMN-binding positions include 125 to 127 (RSS), 238 to 239 (NA), G278, 293 to 297 (KPTSS), and R319.

It belongs to the chorismate synthase family. Homotetramer. Requires FMNH2 as cofactor.

It carries out the reaction 5-O-(1-carboxyvinyl)-3-phosphoshikimate = chorismate + phosphate. Its pathway is metabolic intermediate biosynthesis; chorismate biosynthesis; chorismate from D-erythrose 4-phosphate and phosphoenolpyruvate: step 7/7. In terms of biological role, catalyzes the anti-1,4-elimination of the C-3 phosphate and the C-6 proR hydrogen from 5-enolpyruvylshikimate-3-phosphate (EPSP) to yield chorismate, which is the branch point compound that serves as the starting substrate for the three terminal pathways of aromatic amino acid biosynthesis. This reaction introduces a second double bond into the aromatic ring system. This Acidithiobacillus ferrooxidans (strain ATCC 23270 / DSM 14882 / CIP 104768 / NCIMB 8455) (Ferrobacillus ferrooxidans (strain ATCC 23270)) protein is Chorismate synthase.